A 228-amino-acid polypeptide reads, in one-letter code: 5'-methylthioadenosine/S-adenosylhomocysteine nucleosidase (228 aa).

Glutamate 11 (proton acceptor) is an active-site residue. Residues glycine 77, isoleucine 151, and 172–173 (ME) each bind substrate. The active-site Proton donor is the aspartate 196.

The protein belongs to the PNP/UDP phosphorylase family. MtnN subfamily.

The enzyme catalyses S-adenosyl-L-homocysteine + H2O = S-(5-deoxy-D-ribos-5-yl)-L-homocysteine + adenine. The catalysed reaction is S-methyl-5'-thioadenosine + H2O = 5-(methylsulfanyl)-D-ribose + adenine. It catalyses the reaction 5'-deoxyadenosine + H2O = 5-deoxy-D-ribose + adenine. It participates in amino-acid biosynthesis; L-methionine biosynthesis via salvage pathway; S-methyl-5-thio-alpha-D-ribose 1-phosphate from S-methyl-5'-thioadenosine (hydrolase route): step 1/2. Functionally, catalyzes the irreversible cleavage of the glycosidic bond in both 5'-methylthioadenosine (MTA) and S-adenosylhomocysteine (SAH/AdoHcy) to adenine and the corresponding thioribose, 5'-methylthioribose and S-ribosylhomocysteine, respectively. Also cleaves 5'-deoxyadenosine, a toxic by-product of radical S-adenosylmethionine (SAM) enzymes, into 5-deoxyribose and adenine. The polypeptide is 5'-methylthioadenosine/S-adenosylhomocysteine nucleosidase (Staphylococcus haemolyticus (strain JCSC1435)).